The sequence spans 80 residues: Putative membrane protein insertion efficiency factor (80 aa).

Belongs to the UPF0161 family.

It is found in the cell inner membrane. Its function is as follows. Could be involved in insertion of integral membrane proteins into the membrane. The polypeptide is Putative membrane protein insertion efficiency factor (Picosynechococcus sp. (strain ATCC 27264 / PCC 7002 / PR-6) (Agmenellum quadruplicatum)).